Here is a 152-residue protein sequence, read N- to C-terminus: Small ribosomal subunit protein uS13 (152 aa).

N-acetylserine is present on serine 2. Lysine 91 is covalently cross-linked (Glycyl lysine isopeptide (Lys-Gly) (interchain with G-Cter in SUMO2)). Lysine 94 and lysine 106 each carry N6-acetyllysine; alternate. Residues lysine 94 and lysine 106 each participate in a glycyl lysine isopeptide (Lys-Gly) (interchain with G-Cter in SUMO2); alternate cross-link.

The protein belongs to the universal ribosomal protein uS13 family. Component of the small ribosomal subunit.

It localises to the cytoplasm. Functionally, component of the small ribosomal subunit. The ribosome is a large ribonucleoprotein complex responsible for the synthesis of proteins in the cell. The chain is Small ribosomal subunit protein uS13 (RPS18) from Homo sapiens (Human).